Reading from the N-terminus, the 409-residue chain is Elongation factor Tu (409 aa).

In terms of domain architecture, tr-type G spans 10 to 214 (KPHVNIGTIG…AVDSYIPTPE (205 aa)). Residues 19–26 (GHVDHGKT) are G1. A GTP-binding site is contributed by 19-26 (GHVDHGKT). Thr-26 contributes to the Mg(2+) binding site. The interval 60–64 (GITIN) is G2. A G3 region spans residues 81-84 (DCPG). GTP contacts are provided by residues 81–85 (DCPGH) and 136–139 (NKKD). A G4 region spans residues 136–139 (NKKD). The interval 174–176 (SAK) is G5.

This sequence belongs to the TRAFAC class translation factor GTPase superfamily. Classic translation factor GTPase family. EF-Tu/EF-1A subfamily. As to quaternary structure, monomer.

It localises to the cytoplasm. It catalyses the reaction GTP + H2O = GDP + phosphate + H(+). Functionally, GTP hydrolase that promotes the GTP-dependent binding of aminoacyl-tRNA to the A-site of ribosomes during protein biosynthesis. The chain is Elongation factor Tu from Microcystis aeruginosa (strain NIES-843 / IAM M-2473).